The following is a 428-amino-acid chain: 3-phosphoshikimate 1-carboxyvinyltransferase (428 aa).

Residues Lys-19, Ser-20, and Arg-24 each contribute to the 3-phosphoshikimate site. Lys-19 is a phosphoenolpyruvate binding site. Phosphoenolpyruvate is bound by residues Gly-91 and Arg-119. The 3-phosphoshikimate site is built by Ser-164, Gln-166, Asp-312, and Lys-339. Gln-166 provides a ligand contact to phosphoenolpyruvate. The Proton acceptor role is filled by Asp-312. The phosphoenolpyruvate site is built by Arg-343 and Arg-386.

This sequence belongs to the EPSP synthase family. As to quaternary structure, monomer.

It localises to the cytoplasm. The enzyme catalyses 3-phosphoshikimate + phosphoenolpyruvate = 5-O-(1-carboxyvinyl)-3-phosphoshikimate + phosphate. It functions in the pathway metabolic intermediate biosynthesis; chorismate biosynthesis; chorismate from D-erythrose 4-phosphate and phosphoenolpyruvate: step 6/7. In terms of biological role, catalyzes the transfer of the enolpyruvyl moiety of phosphoenolpyruvate (PEP) to the 5-hydroxyl of shikimate-3-phosphate (S3P) to produce enolpyruvyl shikimate-3-phosphate and inorganic phosphate. The chain is 3-phosphoshikimate 1-carboxyvinyltransferase from Bacillus pumilus (strain SAFR-032).